The primary structure comprises 432 residues: MGPAGSLLGSGQMQITLWGSLAAVAIFFVITFLIFLCSSCDREKKPRQHSGDHENLMNVPSDKEMFSRSVTSLATDAPASSEQNGALTNGDILSEDSTLTCMQHYEEVQTSASDLLDSQDSTGKPKCHQSRELPRIPPESAVDTMLTARSVDGDQGLGMEGPYEVLKDSSSQENMVEDCLYETVKEIKEVAAAAHLEKGHSGKAKSTSASKELPGPQTEGKAEFAEYASVDRNKKCRQSVNVESILGNSCDPEEEAPPPVPVKLLDENENLQEKEGGEAEESATDTTSETNKRFSSLSYKSREEDPTLTEEEISAMYSSVNKPGQLVNKSGQSLTVPESTYTSIQGDPQRSPSSCNDLYATVKDFEKTPNSTLPPAGRPSEEPEPDYEAIQTLNREEEKATLGTNGHHGLVPKENDYESISDLQQGRDITRL.

At methionine 1–threonine 16 the chain is on the extracellular side. Residues leucine 17–cysteine 37 traverse the membrane as a helical; Signal-anchor for type III membrane protein segment. 2 S-palmitoyl cysteine lipidation sites follow: cysteine 37 and cysteine 40. Topologically, residues serine 38–leucine 432 are cytoplasmic. Phosphoserine is present on residues serine 50 and serine 61. Position 105 is a phosphotyrosine; by LYN (tyrosine 105). Residues threonine 110–threonine 122 show a composition bias toward polar residues. Positions threonine 110–proline 137 are disordered. Phosphotyrosine occurs at positions 163, 181, and 227. Disordered regions lie at residues glutamate 197 to valine 230 and serine 244 to leucine 432. The segment covering glycine 220 to valine 230 has biased composition (basic and acidic residues). At serine 229 the chain carries Phosphoserine. Positions methionine 316–asparagine 356 are enriched in polar residues. The residue at position 317 (tyrosine 317) is a Phosphotyrosine; by FYN and LYN. Residues tyrosine 317–valine 320 are interaction with CSK. Position 354 is a phosphoserine (serine 354). At tyrosine 359 the chain carries Phosphotyrosine. Phosphoserine is present on serine 380. Tyrosine 387 and tyrosine 417 each carry phosphotyrosine. Positions threonine 430–leucine 432 are interaction with NHERF1.

Interacts with FYN. When phosphorylated, interacts with CSK. Interacts with NHERF1/EBP50. In resting T-cells, part of a PAG1-NHERF1-MSN complex which is disrupted upon TCR activation. Interacts with LYN on plasma membrane lipid rafts. Identified in a complex with LYN and STAT3. Post-translationally, palmitoylated. Phosphorylated by FYN on Tyr-317 in resting T-cells; which promotes interaction with CSK. Dephosphorylated by PTPRC/CD45 upon TCR activation; which leads to CSK dissociation. May also be dephosphorylated by PTPN11. Hyperphosphorylated in mast cells upon FCER1 activation. Phosphorylated by LYN. In terms of tissue distribution, ubiquitously expressed. Present in germinal center B-cells, plasma cells, T-cells, monocytes and platelets (at protein level).

It is found in the cell membrane. In terms of biological role, negatively regulates TCR (T-cell antigen receptor)-mediated signaling in T-cells and FCER1 (high affinity immunoglobulin epsilon receptor)-mediated signaling in mast cells. Promotes CSK activation and recruitment to lipid rafts, which results in LCK inhibition. Inhibits immunological synapse formation by preventing dynamic arrangement of lipid raft proteins. May be involved in cell adhesion signaling. The polypeptide is Phosphoprotein associated with glycosphingolipid-enriched microdomains 1 (PAG1) (Homo sapiens (Human)).